Here is a 62-residue protein sequence, read N- to C-terminus: Photosystem II reaction center protein Z (62 aa).

The next 2 membrane-spanning stretches (helical) occupy residues Ala-8–Ala-28 and Phe-41–Ile-61.

The protein belongs to the PsbZ family. PSII is composed of 1 copy each of membrane proteins PsbA, PsbB, PsbC, PsbD, PsbE, PsbF, PsbH, PsbI, PsbJ, PsbK, PsbL, PsbM, PsbT, PsbY, PsbZ, Psb30/Ycf12, at least 3 peripheral proteins of the oxygen-evolving complex and a large number of cofactors. It forms dimeric complexes.

It localises to the plastid. It is found in the chloroplast thylakoid membrane. Its function is as follows. May control the interaction of photosystem II (PSII) cores with the light-harvesting antenna, regulates electron flow through the 2 photosystem reaction centers. PSII is a light-driven water plastoquinone oxidoreductase, using light energy to abstract electrons from H(2)O, generating a proton gradient subsequently used for ATP formation. The polypeptide is Photosystem II reaction center protein Z (Phalaenopsis aphrodite subsp. formosana (Moth orchid)).